A 540-amino-acid polypeptide reads, in one-letter code: Tyrosine-protein kinase transforming protein erbB (540 aa).

The region spanning Phe-132–Leu-399 is the Protein kinase domain. Residues Leu-138–Val-146 and Lys-165 each bind ATP. Asp-257 serves as the catalytic Proton acceptor.

It belongs to the protein kinase superfamily. Tyr protein kinase family. EGF receptor subfamily.

The catalysed reaction is L-tyrosyl-[protein] + ATP = O-phospho-L-tyrosyl-[protein] + ADP + H(+). The sequence is that of Tyrosine-protein kinase transforming protein erbB (V-ERBB) from Avian erythroblastosis virus (strain ts167).